We begin with the raw amino-acid sequence, 666 residues long: E3 ubiquitin-protein ligase MBR2 (666 aa).

Polar residues-rich tracts occupy residues 1–14 (MQGPRSTGDSSTGI), 23–35 (CSTNSETTSNNIL), 42–58 (FPNNTTGSGRPTYASSS), and 73–88 (SSSRLGPSDHLNSNGS). 6 disordered regions span residues 1 to 58 (MQGP…ASSS), 73 to 95 (SSSRLGPSDHLNSNGSKTDRQLL), 155 to 179 (SLGSSSQTAEERSSGPGSSLGGLGS), 221 to 329 (SSLS…DGQP), 400 to 433 (NPSTSGDSPFVPRAGSSSGIHGLQPNPTWVTPHN), and 457 to 491 (GASLPLLPTGPSVSSNEAAAPSGSSSRSHRSRQRR). Positions 221 to 239 (SSLSLSMPSQNSPNVNNQS) are enriched in low complexity. 3 stretches are compositionally biased toward polar residues: residues 258-268 (AFPSTRSTETI), 286-303 (FSFTQSGSSVRQQQQLPA), and 414-433 (GSSSGIHGLQPNPTWVTPHN). The RING-type; atypical zinc finger occupies 619-660 (CCVCQEEYAEGDDLGTLGCGHEFHTACVKQWLMLKNLCPICK).

Belongs to the RING-type zinc finger family. As to quaternary structure, interacts with MED25 and UBC11.

It carries out the reaction S-ubiquitinyl-[E2 ubiquitin-conjugating enzyme]-L-cysteine + [acceptor protein]-L-lysine = [E2 ubiquitin-conjugating enzyme]-L-cysteine + N(6)-ubiquitinyl-[acceptor protein]-L-lysine.. It participates in protein modification; protein ubiquitination. Functionally, E3 ubiquitin-protein ligase that functions as a regulator of MED25 stability by targeting MED25 for degradation in a RING-H2-dependent way. Proteasome-dependent degradation of MED25 seems to activate its function as positive regulator of FLOWERING LOCUS T (FT) and is important to induce the expression of FT and consequently to promote flowering. May function downstream of HAL3 and be required for HAL3-regulated plant growth. Activation of MBR2 by HAL3 may lead to the degradation of cell cycle suppressors, resulting in enhancement of cell division and plant growth. The sequence is that of E3 ubiquitin-protein ligase MBR2 (MBR2) from Arabidopsis thaliana (Mouse-ear cress).